The following is a 280-amino-acid chain: Biotin carboxyl carrier protein of acetyl-CoA carboxylase 1, chloroplastic (280 aa).

Residues 1 to 82 (MASSSFSVTS…SNAAKVDGPS (82 aa)) constitute a chloroplast transit peptide. Polar residues predominate over residues 52–75 (PSRSSYPVVKAQSNKVSTGASSNA). Disordered regions lie at residues 52 to 106 (PSRS…ATEE) and 164 to 215 (QPSY…GTFY). Low complexity predominate over residues 177 to 188 (PAAAAPAPSTPA). Pro residues predominate over residues 189 to 198 (SLPPPSPPTP). A Biotinyl-binding domain is found at 203 to 279 (LPTVKSPMAG…SLDTPLFVVQ (77 aa)). K245 bears the N6-biotinyllysine mark.

As to quaternary structure, acetyl-CoA carboxylase is a heterohexamer composed of biotin carboxyl carrier protein, biotin carboxylase and 2 subunits each of ACCase subunit alpha and ACCase plastid-coded subunit beta (accD). In terms of tissue distribution, present in developing tissues from roots, leaves, flowers, siliques and seeds (at protein level).

Its subcellular location is the plastid. The protein resides in the chloroplast. The protein operates within lipid metabolism; fatty acid biosynthesis. This protein is a component of the acetyl coenzyme A carboxylase complex; first, biotin carboxylase catalyzes the carboxylation of the carrier protein and then the transcarboxylase transfers the carboxyl group to form malonyl-CoA. This Arabidopsis thaliana (Mouse-ear cress) protein is Biotin carboxyl carrier protein of acetyl-CoA carboxylase 1, chloroplastic (BCCP1).